The sequence spans 78 residues: MSRVCQLTGTRANNGMSVSHSHIRTKKLQQANLQQRRLWWEEENKWINIRVTTRALKTIQKKGLGKYAKSLGVDLNKL.

Residues 1-20 (MSRVCQLTGTRANNGMSVSH) show a composition bias toward polar residues. The interval 1–23 (MSRVCQLTGTRANNGMSVSHSHI) is disordered.

The protein belongs to the bacterial ribosomal protein bL28 family.

The sequence is that of Large ribosomal subunit protein bL28 from Prochlorococcus marinus (strain NATL2A).